Reading from the N-terminus, the 122-residue chain is MQDNSSHSRESASAGDDPLGIDKLTVDYDYLLYKIRDYVQSIQLDTTELCKKQNEVMVNGIIENTIDKNIAKFKELLEKCDTLENHYEMLNQLAIITDTFKERIAEAVNNYNSLKKGASKSK.

Basic and acidic residues predominate over residues 1-10 (MQDNSSHSRE). Residues 1 to 21 (MQDNSSHSRESASAGDDPLGI) form a disordered region. A coiled-coil region spans residues 63-95 (ENTIDKNIAKFKELLEKCDTLENHYEMLNQLAI).

This sequence belongs to the BLOC1S4 family. In terms of assembly, component of the biogenesis of lysosome-related organelles complex-1 (BLOC-1) composed of at least BLI1, BLS1, CNL1, KXD1, SNN1 and VAB2.

It is found in the cytoplasm. Component of the biogenesis of lysosome-related organelles complex-1 (BLOC-1), a complex that is involved in endosomal cargo sorting. This is Biogenesis of lysosome-related organelles complex 1 subunit CNL1 (CLN1) from Saccharomyces cerevisiae (strain RM11-1a) (Baker's yeast).